A 379-amino-acid chain; its full sequence is Probable pectin lyase B (379 aa).

Positions 1–20 (MHYKLLFAAAAASLASAVSA) are cleaved as a signal peptide. 2 disulfide bridges follow: C83–C102 and C92–C226. N129 and N252 each carry an N-linked (GlcNAc...) asparagine glycan. R256 is a catalytic residue. Cysteines 323 and 331 form a disulfide.

This sequence belongs to the polysaccharide lyase 1 family.

Its subcellular location is the secreted. It catalyses the reaction Eliminative cleavage of (1-&gt;4)-alpha-D-galacturonan methyl ester to give oligosaccharides with 4-deoxy-6-O-methyl-alpha-D-galact-4-enuronosyl groups at their non-reducing ends.. In terms of biological role, pectinolytic enzymes consist of four classes of enzymes: pectin lyase, polygalacturonase, pectin methylesterase and rhamnogalacturonase. Among pectinolytic enzymes, pectin lyase is the most important in depolymerization of pectin, since it cleaves internal glycosidic bonds of highly methylated pectins. In Aspergillus niger (strain ATCC MYA-4892 / CBS 513.88 / FGSC A1513), this protein is Probable pectin lyase B (pelB).